The following is a 117-amino-acid chain: Immunoglobulin kappa variable 1-39 (117 aa).

An N-terminal signal peptide occupies residues 1-22 (MDMRVPAQLLGLLLLWLRGARC). Positions 23–45 (DIQMTQSPSSLSASVGDRVTITC) are framework-1. The Ig-like domain maps to 24-117 (IQMTQSPSSL…YYCQQSYSTP (94 aa)). An intrachain disulfide couples C45 to C110. Residues 46–56 (RASQSISSYLN) form a complementarity-determining-1 region. The interval 57–71 (WYQQKPGKAPKLLIY) is framework-2. The complementarity-determining-2 stretch occupies residues 72–78 (AASSLQS). Residues 79–110 (GVPSRFSGSGSGTDFTLTISSLQPEDFATYYC) form a framework-3 region. Positions 111 to 117 (QQSYSTP) are complementarity-determining-3.

As to quaternary structure, immunoglobulins are composed of two identical heavy chains and two identical light chains; disulfide-linked.

The protein localises to the secreted. Its subcellular location is the cell membrane. Its function is as follows. V region of the variable domain of immunoglobulin light chains that participates in the antigen recognition. Immunoglobulins, also known as antibodies, are membrane-bound or secreted glycoproteins produced by B lymphocytes. In the recognition phase of humoral immunity, the membrane-bound immunoglobulins serve as receptors which, upon binding of a specific antigen, trigger the clonal expansion and differentiation of B lymphocytes into immunoglobulins-secreting plasma cells. Secreted immunoglobulins mediate the effector phase of humoral immunity, which results in the elimination of bound antigens. The antigen binding site is formed by the variable domain of one heavy chain, together with that of its associated light chain. Thus, each immunoglobulin has two antigen binding sites with remarkable affinity for a particular antigen. The variable domains are assembled by a process called V-(D)-J rearrangement and can then be subjected to somatic hypermutations which, after exposure to antigen and selection, allow affinity maturation for a particular antigen. The chain is Immunoglobulin kappa variable 1-39 from Homo sapiens (Human).